A 659-amino-acid polypeptide reads, in one-letter code: Delta(6)-protoilludene synthase (659 aa).

Residues Asp91, Asn227, Ser231, and Glu235 each contribute to the Mg(2+) site. Positions 91-95 (DEHTD) match the DDXXD motif motif. (2E,6E)-farnesyl diphosphate contacts are provided by Arg316 and Tyr317. Residues 528–586 (PQFSKTSGAPNGAHTPTTTNGSIKSNGFVSGDTNGHANGNGHVQTRSSTPSSSSSSTSS) form a disordered region. Residues 530-573 (FSKTSGAPNGAHTPTTTNGSIKSNGFVSGDTNGHANGNGHVQTR) show a composition bias toward polar residues. Residues 574 to 586 (SSTPSSSSSSTSS) show a composition bias toward low complexity.

Belongs to the terpene synthase family. The cofactor is Mg(2+).

It catalyses the reaction (2E,6E)-farnesyl diphosphate = Delta(6)-protoilludene + diphosphate. In terms of biological role, terpene cyclase that catalyzes the cyclization of farnesyl diphosphate (FPP) to delta(6)-protoilludene. The chain is Delta(6)-protoilludene synthase from Cyclocybe aegerita (Black poplar mushroom).